The following is a 221-amino-acid chain: Glutathione peroxidase 6 (221 aa).

Residues 1–19 (MTQQFWGPCLFSLFMAVLA) form the signal peptide. C73 is a catalytic residue.

Belongs to the glutathione peroxidase family. In terms of tissue distribution, expressed in the Bowman glands.

It localises to the secreted. It carries out the reaction 2 glutathione + H2O2 = glutathione disulfide + 2 H2O. This Rattus norvegicus (Rat) protein is Glutathione peroxidase 6 (Gpx6).